A 99-amino-acid polypeptide reads, in one-letter code: uncharacterized protein (99 aa).

The protein localises to the host cytoplasm. This is an uncharacterized protein from Escherichia phage Mu (Bacteriophage Mu).